Consider the following 352-residue polypeptide: tRNA-specific 2-thiouridylase MnmA (352 aa).

ATP contacts are provided by residues 7–14 (GLSGGVDS) and L33. The active-site Nucleophile is the C94. Cysteines 94 and 193 form a disulfide. G119 provides a ligand contact to ATP. The tract at residues 143-145 (KDQ) is interaction with tRNA. C193 (cysteine persulfide intermediate) is an active-site residue. The interval 298–299 (RY) is interaction with tRNA.

Belongs to the MnmA/TRMU family.

The protein localises to the cytoplasm. It carries out the reaction S-sulfanyl-L-cysteinyl-[protein] + uridine(34) in tRNA + AH2 + ATP = 2-thiouridine(34) in tRNA + L-cysteinyl-[protein] + A + AMP + diphosphate + H(+). Its function is as follows. Catalyzes the 2-thiolation of uridine at the wobble position (U34) of tRNA, leading to the formation of s(2)U34. This chain is tRNA-specific 2-thiouridylase MnmA, found in Trichormus variabilis (strain ATCC 29413 / PCC 7937) (Anabaena variabilis).